A 303-amino-acid polypeptide reads, in one-letter code: Aspartate carbamoyltransferase catalytic subunit (303 aa).

2 residues coordinate carbamoyl phosphate: Arg-51 and Thr-52. L-aspartate is bound at residue Lys-80. The carbamoyl phosphate site is built by Arg-101, His-129, and Gln-132. L-aspartate is bound by residues Arg-162 and Arg-221. 2 residues coordinate carbamoyl phosphate: Leu-260 and Pro-261.

It belongs to the aspartate/ornithine carbamoyltransferase superfamily. ATCase family. Heterooligomer of catalytic and regulatory chains.

The catalysed reaction is carbamoyl phosphate + L-aspartate = N-carbamoyl-L-aspartate + phosphate + H(+). It participates in pyrimidine metabolism; UMP biosynthesis via de novo pathway; (S)-dihydroorotate from bicarbonate: step 2/3. Functionally, catalyzes the condensation of carbamoyl phosphate and aspartate to form carbamoyl aspartate and inorganic phosphate, the committed step in the de novo pyrimidine nucleotide biosynthesis pathway. The chain is Aspartate carbamoyltransferase catalytic subunit from Saccharolobus islandicus (strain Y.N.15.51 / Yellowstone #2) (Sulfolobus islandicus).